The following is a 79-amino-acid chain: uncharacterized protein (79 aa).

This is an uncharacterized protein from Dryophytes versicolor (chameleon treefrog).